A 134-amino-acid chain; its full sequence is Calvin cycle protein CP12-3, chloroplastic (134 aa).

A disordered region spans residues 1–21; it reads MISGSATASHGRVLLPSQRER. The N-terminal 42 residues, 1–42, are a transit peptide targeting the chloroplast; sequence MISGSATASHGRVLLPSQRERRPVSTGSNILRFRETVPRQFS. 2 disulfide bridges follow: Cys78–Cys87 and Cys120–Cys129.

This sequence belongs to the CP12 family. Monomer. Component of a complex that contains two dimers of PRK, two tetramers of GAPDH and CP12. CP12 associates with GAPDH, causing its conformation to change. This GAPDH/CP12 complex binds PRK to form a half-complex (one unit). This unit probably dimerizes due partially to interactions between the enzymes of each unit. Post-translationally, contains two disulfide bonds; only the oxidized protein, with two disulfide bonds, is active in complex formation. The C-terminal disulfide is involved in the interaction with GAPDH and the N-terminal disulfide mediates the binding of PRK with this binary complex. As to expression, mostly expressed, at low levels, in stems and, to a lesser extent, in leaves and roots.

It is found in the plastid. The protein localises to the chloroplast. Functionally, acts as a linker essential in the assembly of a core complex of PRK/GAPDH. Coordinates the reversible inactivation of chloroplast enzymes GAPDH and PRK during darkness in photosynthetic tissues. In Arabidopsis thaliana (Mouse-ear cress), this protein is Calvin cycle protein CP12-3, chloroplastic (CP12-3).